The following is a 423-amino-acid chain: uncharacterized protein (423 aa).

The Mg(2+) site is built by Lys181, Asp183, and Glu184. Residue Lys181 is modified to N6-carboxylysine.

It belongs to the RuBisCO large chain family. Type IV subfamily. Mg(2+) serves as cofactor.

In terms of biological role, may be involved in sulfur metabolism and oxidative stress response. Does not show RuBisCO activity. This is an uncharacterized protein from Bordetella bronchiseptica (strain ATCC BAA-588 / NCTC 13252 / RB50) (Alcaligenes bronchisepticus).